The sequence spans 281 residues: 2-dehydro-3-deoxyphosphooctonate aldolase (281 aa).

This sequence belongs to the KdsA family.

The protein localises to the cytoplasm. The catalysed reaction is D-arabinose 5-phosphate + phosphoenolpyruvate + H2O = 3-deoxy-alpha-D-manno-2-octulosonate-8-phosphate + phosphate. Its pathway is carbohydrate biosynthesis; 3-deoxy-D-manno-octulosonate biosynthesis; 3-deoxy-D-manno-octulosonate from D-ribulose 5-phosphate: step 2/3. It functions in the pathway bacterial outer membrane biogenesis; lipopolysaccharide biosynthesis. In Pseudomonas aeruginosa (strain UCBPP-PA14), this protein is 2-dehydro-3-deoxyphosphooctonate aldolase.